Here is a 120-residue protein sequence, read N- to C-terminus: Large ribosomal subunit protein uL18 (120 aa).

This sequence belongs to the universal ribosomal protein uL18 family. Part of the 50S ribosomal subunit; part of the 5S rRNA/L5/L18/L25 subcomplex. Contacts the 5S and 23S rRNAs.

In terms of biological role, this is one of the proteins that bind and probably mediate the attachment of the 5S RNA into the large ribosomal subunit, where it forms part of the central protuberance. In Staphylococcus haemolyticus (strain JCSC1435), this protein is Large ribosomal subunit protein uL18.